We begin with the raw amino-acid sequence, 570 residues long: Ferroportin (570 aa).

At 1-23 the chain is on the cytoplasmic side; it reads MTKARDQTHQEGCCGSLANYLTS. Residues 24–53 traverse the membrane as a helical segment; sequence AKFLLYLGHSLSTWGDRMWHFAVSVFLVEL. Positions 39 and 43 each coordinate Fe cation. The Extracellular portion of the chain corresponds to 54–57; sequence YGNS. The chain crosses the membrane as a helical span at residues 58-84; the sequence is LLLTAVYGLVVAGSVLVLGAIIGDWVD. Over 85–87 the chain is Cytoplasmic; the sequence is KNA. The chain crosses the membrane as a helical span at residues 88–118; that stretch reads RLKVAQTSLVVQNVSVILCGIILMMVFLHKN. At 119–126 the chain is on the extracellular side; sequence ELLTMYHG. The helical transmembrane segment at 127–162 threads the bilayer; sequence WVLTVCYILIITIANIANLASTATAITIQRDWIVVV. Residues 163 to 164 lie on the Cytoplasmic side of the membrane; sequence AG. Residues 165-195 traverse the membrane as a helical segment; the sequence is ENRSRLADMNATIRRIDQLTNILAPMAVGQI. At 196-202 the chain is on the extracellular side; the sequence is MTFGSPV. A helical membrane pass occupies residues 203–229; the sequence is IGCGFISGWNLVSMCVEYFLLWKVYQK. Residues 230–306 are Cytoplasmic-facing; the sequence is TPALAVKAAL…DGWVSYYNQP (77 aa). Residues 307–333 form a helical membrane-spanning segment; sequence VFLAGMGLAFLYMTVLGFDCITTGYAY. Cys-326 is a Fe cation binding site. Residues 334-338 lie on the Extracellular side of the membrane; it reads TQGLS. A helical membrane pass occupies residues 339-366; the sequence is GSILSILMGASAITGIMGTVAFTWLRRK. The Cytoplasmic segment spans residues 367-368; sequence CG. Residues 369-391 form a helical membrane-spanning segment; it reads LVRTGLFSGLAQLSCLILCVISV. Topologically, residues 392–452 are extracellular; that stretch reads FMPGSPLDLS…EMSTKPIPIV (61 aa). N-linked (GlcNAc...) asparagine glycosylation is present at Asn-437. A helical transmembrane segment spans residues 453-482; the sequence is SVSLLFAGVIAARIGLWSFDLTVTQLLQEN. The Cytoplasmic portion of the chain corresponds to 483–487; sequence VIESE. A helical transmembrane segment spans residues 488–512; sequence RGIINGVQNSMNYLLDLLHFIMVIL. His-506 is a binding site for Fe cation. Over 513–515 the chain is Extracellular; that stretch reads APN. Residues 516–541 traverse the membrane as a helical segment; that stretch reads PEAFGLLVLISVSFVAMGHLMYFRFA. Topologically, residues 542–570 are cytoplasmic; that stretch reads QKTLGNQIFVCGPDEKEVTDENQPNTSVV.

Belongs to the ferroportin (FP) (TC 2.A.100) family. SLC40A subfamily. In terms of assembly, identified in a complex with STOM. Interacts with HAMP; affinity of the peptide hormone HAMP for SLC40A1 increases by 80-fold in the presence of iron and the interaction promotes SLC40A1 ubiquitination and degradation. Part of a complex composed of SLC40A1/ferroportin, TF/transferrin and HEPH/hephaestin that transfers iron from cells to transferrin. In terms of processing, polyubiquitinated by RNF217; leading to proteasomal degradation. Under conditions of high systemic iron levels, both the hormone peptide hepcidin/HAMP and holo(iron bound)-transferrin/TF induce the ubiquitination, internalization and proteasomal degradation of SLC40A1 to control iron release from cells. In terms of tissue distribution, high expression in spleen, liver, kidney, heart and duodenum.

The protein localises to the cell membrane. It localises to the basolateral cell membrane. The enzyme catalyses Fe(2+)(in) = Fe(2+)(out). Its function is as follows. Transports Fe(2+) from the inside of a cell to the outside of the cell, playing a key role for maintaining systemic iron homeostasis. Transports iron from intestinal, splenic, hepatic cells, macrophages and erythrocytes into the blood to provide iron to other tissues. Controls therefore dietary iron uptake, iron recycling by macrophages and erythrocytes, and release of iron stores in hepatocytes. When iron is in excess in serum, circulating HAMP/hepcidin levels increase resulting in a degradation of SLC40A1, thus limiting the iron efflux to plasma. The protein is Ferroportin of Mus musculus (Mouse).